Here is a 266-residue protein sequence, read N- to C-terminus: Thiazole synthase (266 aa).

The active-site Schiff-base intermediate with DXP is the K106. 1-deoxy-D-xylulose 5-phosphate contacts are provided by residues G167, A193 to G194, and N215 to T216.

The protein belongs to the ThiG family. Homotetramer. Forms heterodimers with either ThiH or ThiS.

Its subcellular location is the plastid. The protein resides in the chloroplast. The catalysed reaction is [ThiS sulfur-carrier protein]-C-terminal-Gly-aminoethanethioate + 2-iminoacetate + 1-deoxy-D-xylulose 5-phosphate = [ThiS sulfur-carrier protein]-C-terminal Gly-Gly + 2-[(2R,5Z)-2-carboxy-4-methylthiazol-5(2H)-ylidene]ethyl phosphate + 2 H2O + H(+). It functions in the pathway cofactor biosynthesis; thiamine diphosphate biosynthesis. Its function is as follows. Catalyzes the rearrangement of 1-deoxy-D-xylulose 5-phosphate (DXP) to produce the thiazole phosphate moiety of thiamine. Sulfur is provided by the thiocarboxylate moiety of the carrier protein ThiS. In vitro, sulfur can be provided by H(2)S. In Cyanidium caldarium (Red alga), this protein is Thiazole synthase.